The sequence spans 139 residues: MRVTQGCFSFLPDLSDDQIKQQVSYAMSKGWAVSVEWTDDPHPRNSYWELWGLPLFDVKDPAAVMYELAECRKVNPEGYIKINAFDASIGTESCVMSFIVQRPITEPGFYLERNEIHGRNIQYTISSYAVQARPSGDRY.

It belongs to the RuBisCO small chain family. Heterohexadecamer of 8 large and 8 small subunits.

The protein localises to the plastid. It localises to the chloroplast. RuBisCO catalyzes two reactions: the carboxylation of D-ribulose 1,5-bisphosphate, the primary event in carbon dioxide fixation, as well as the oxidative fragmentation of the pentose substrate in the photorespiration process. Both reactions occur simultaneously and in competition at the same active site. Although the small subunit is not catalytic it is essential for maximal activity. This is Ribulose bisphosphate carboxylase small subunit from Ectocarpus siliculosus (Brown alga).